The sequence spans 309 residues: Ecto-ADP-ribosyltransferase 5 (309 aa).

Positions 1–23 are cleaved as a signal peptide; that stretch reads MILEDLLMVLSCLSLHALWKVRA. Cys-43 and Cys-259 are joined by a disulfide. In terms of domain architecture, TR mART core spans 63–253; sequence ALLRESWEAA…IVTLWSYDQT (191 aa). Position 100 (Tyr-100) interacts with NAD(+). N-linked (GlcNAc...) asparagine glycosylation is present at Asn-102. NAD(+)-binding residues include Arg-161 and Gln-181. Arg-161 is an active-site residue. The active site involves Ser-184. A glycan (N-linked (GlcNAc...) asparagine) is linked at Asn-197. Ser-215 lines the NAD(+) pocket. Glu-222 is an active-site residue.

The protein belongs to the Arg-specific ADP-ribosyltransferase family. Abundantly expressed in testis. Lower levels in cardiac and skeletal muscle.

The protein resides in the secreted. It is found in the membrane. The enzyme catalyses L-arginyl-[protein] + NAD(+) = N(omega)-(ADP-D-ribosyl)-L-arginyl-[protein] + nicotinamide + H(+). This Mus musculus (Mouse) protein is Ecto-ADP-ribosyltransferase 5 (Art5).